The chain runs to 60 residues: Small ribosomal subunit protein bS21 (60 aa).

This sequence belongs to the bacterial ribosomal protein bS21 family.

The polypeptide is Small ribosomal subunit protein bS21 (rpsU) (Mycoplasma pneumoniae (strain ATCC 29342 / M129 / Subtype 1) (Mycoplasmoides pneumoniae)).